Here is a 463-residue protein sequence, read N- to C-terminus: Chromosomal replication initiator protein DnaA (463 aa).

Residues 1–84 (MNTNQIILTN…QLFQHYNNAI (84 aa)) form a domain I, interacts with DnaA modulators region. The interval 84–124 (IKTVEIITKELPASNQATLELPTKTFADIGSSELNSENIFS) is domain II. The interval 125–343 (TFDIRFTFDN…GALNKVIAHS (219 aa)) is domain III, AAA+ region. Residues Gly-171, Gly-173, Lys-174, and Thr-175 each contribute to the ATP site. Positions 344-463 (NFTAKEITLE…INLMMKILQN (120 aa)) are domain IV, binds dsDNA.

This sequence belongs to the DnaA family. In terms of assembly, oligomerizes as a right-handed, spiral filament on DNA at oriC.

It localises to the cytoplasm. In terms of biological role, plays an essential role in the initiation and regulation of chromosomal replication. ATP-DnaA binds to the origin of replication (oriC) to initiate formation of the DNA replication initiation complex once per cell cycle. Binds the DnaA box (a 9 base pair repeat at the origin) and separates the double-stranded (ds)DNA. Forms a right-handed helical filament on oriC DNA; dsDNA binds to the exterior of the filament while single-stranded (ss)DNA is stabiized in the filament's interior. The ATP-DnaA-oriC complex binds and stabilizes one strand of the AT-rich DNA unwinding element (DUE), permitting loading of DNA polymerase. After initiation quickly degrades to an ADP-DnaA complex that is not apt for DNA replication. Binds acidic phospholipids. In Rickettsia bellii (strain OSU 85-389), this protein is Chromosomal replication initiator protein DnaA.